The chain runs to 1209 residues: Phospholipid-transporting ATPase ID (1209 aa).

At 1–68 (MTVPKEIPEK…NIVTFLPVNL (68 aa)) the chain is on the cytoplasmic side. The segment at 12–36 (ARAGAPPSWSQKKPSWGTEEERRAR) is disordered. Residues 69–89 (FEQFQEVANTYFLFLLILQLI) form a helical membrane-spanning segment. At 90-91 (PQ) the chain is on the exoplasmic loop side. The helical transmembrane segment at 92–112 (ISSLSWFTTIVPLVLVLTITA) threads the bilayer. At 113 to 295 (VKDATDDYFR…TSIDRLMNTL (183 aa)) the chain is on the cytoplasmic side. Residues 296-316 (VLWIFGFLVCMGVILAIGNAI) form a helical membrane-spanning segment. Topologically, residues 317–338 (WEHEVGTRFQVYLPWDEAVDSA) are exoplasmic loop. Residues 339–359 (FFSGFLSFWSYIIILNTVVPI) form a helical membrane-spanning segment. Topologically, residues 360-898 (SLYVSVEVIR…KFLCYFFYKN (539 aa)) are cytoplasmic. The active-site 4-aspartylphosphate intermediate is aspartate 411. The ATP site is built by aspartate 411, lysine 412, threonine 413, glutamate 515, phenylalanine 556, lysine 579, arginine 613, threonine 693, glycine 694, aspartate 695, arginine 807, and lysine 813. Aspartate 411 provides a ligand contact to Mg(2+). Threonine 413 is a Mg(2+) binding site. Aspartate 833 contributes to the Mg(2+) binding site. 2 residues coordinate ATP: asparagine 836 and aspartate 837. Position 837 (aspartate 837) interacts with Mg(2+). Residues 899 to 919 (FAFTMVHFWFGFFCGFSAQTV) traverse the membrane as a helical segment. Residues 920–922 (YDQ) lie on the Exoplasmic loop side of the membrane. Residues 923–943 (YFITLYNIVYTSLPVLAMGVF) form a helical membrane-spanning segment. Residues 944–972 (DQDVPEQRSMEYPKLYEPGQLNLLFNKRE) are Cytoplasmic-facing. Residues 973 to 993 (FFICIAQGIYTSVLMFFIPYG) form a helical membrane-spanning segment. Topologically, residues 994–1011 (VFAEATRDDGTQLADYQS) are exoplasmic loop. The helical transmembrane segment at 1012 to 1032 (FAVTVATSLVIVVSVQIGLDT) threads the bilayer. Over 1033-1036 (GYWT) the chain is Cytoplasmic. The chain crosses the membrane as a helical span at residues 1037 to 1057 (AINHFFIWGSLAVYFAILFAM). The Exoplasmic loop segment spans residues 1058 to 1082 (HSNGLFDMFPNQFRFVGNAQNTLAQ). A helical transmembrane segment spans residues 1083 to 1103 (PTVWLTIALTTAVCIMPVVAF). Over 1104-1209 (RFLRLSLKPD…SGGAEKPLKG (106 aa)) the chain is Cytoplasmic. A Phosphoserine modification is found at serine 1175. Positions 1179–1209 (RSSSSWIESLRRKKSDSANSPSGGAEKPLKG) are disordered.

The protein belongs to the cation transport ATPase (P-type) (TC 3.A.3) family. Type IV subfamily. As to quaternary structure, component of a P4-ATPase flippase complex which consists of a catalytic alpha subunit ATP8B2 and an accessory beta subunit TMEM30A or TMEM30B. It depends on Mg(2+) as a cofactor. In terms of tissue distribution, expressed in brain and testes (at protein level).

The protein localises to the cell membrane. It localises to the endoplasmic reticulum membrane. The enzyme catalyses ATP + H2O + phospholipidSide 1 = ADP + phosphate + phospholipidSide 2.. It carries out the reaction a 1,2-diacyl-sn-glycero-3-phosphocholine(out) + ATP + H2O = a 1,2-diacyl-sn-glycero-3-phosphocholine(in) + ADP + phosphate + H(+). Its function is as follows. Catalytic component of P4-ATPase flippase complex, which catalyzes the hydrolysis of ATP coupled to the transport of phosphatidylcholine (PC) from the outer to the inner leaflet of the plasma membrane. May contribute to the maintenance of membrane lipid asymmetry. This is Phospholipid-transporting ATPase ID from Mus musculus (Mouse).